Reading from the N-terminus, the 674-residue chain is MFERNQKTIFVLDHTRYFSIASEEYISMDFLKGKPSAHSSAGGSSQFSKSLWTCACESSIEYCRVVWDLFPGKKHVRFIVSDTAAHIVNTWSASTQNMSHVMNAMVMVGVPSRSMPQSSDYSVIHGLRAAIEALAEPTDEQSQAMASGIPDDLILNEGRVICITSARDNTSMKSLEDIFNTVLIQQNVLSATPPKKGLGINHCHLVILNIVPLGIDSMVTNRNLLEISPLLDVEIHTVGAPDISYKLTHLILDHYDLASTTVTNIPMKEEQNANSSANYDVEILHSRRAHSITCGPDFSLPTSIKQGATYETVTLKWCTPRGCGSADLQPCLGQFLVTPVDVTSRPSSCLINFLLNGRSVLLEMPRKTGSKATSHMLSARGGEIFIHSLCITRSCMDEAPSIADGPGGRVNDYRTSELGQLMKMSRMVPLKSRDPAAPNLPRRLPRYFPLTTTSTVLFHLQRHLSWLPHFLHLLVKEMDKQDEVRCQQHIHELYKSASRGDVLPFTHTNGARLKPHKAKDQYRLLYRELEQLIQLNASTVHHKNLLESLQTLRAAYGDAPSKSEAGTVNLRSFTESPLSPERLEAMSNVSISSSTNSNSLLKASKRRMSNCGTRSLLDIISSAERSQSNKRLDFSGRICTPIGQIAKLYPDFGNKEKDAAAAAAASGVGVAPKE.

A coiled-coil region spans residues 516–538 (HKAKDQYRLLYRELEQLIQLNAS). Positions 601 to 607 (LKASKRR) match the Nuclear localization signal (NLS) motif.

Belongs to the Integrator subunit 13 family. As to quaternary structure, belongs to the multiprotein complex Integrator, at least composed of IntS1, IntS2, IntS3, IntS4, omd/IntS5, IntS6, defl/IntS7, IntS8, IntS9, IntS10, IntS11, IntS12, asun/IntS13, IntS14 and IntS15. The core complex associates with protein phosphatase 2A subunits mts/PP2A and Pp2A-29B, to form the Integrator-PP2A (INTAC) complex. In terms of processing, phosphorylated.

It is found in the nucleus. It localises to the cytoplasm. The protein resides in the perinuclear region. Component of the integrator complex, a multiprotein complex that terminates RNA polymerase II (Pol II) transcription in the promoter-proximal region of genes. The integrator complex provides a quality checkpoint during transcription elongation by driving premature transcription termination of transcripts that are unfavorably configured for transcriptional elongation: the complex terminates transcription by (1) catalyzing dephosphorylation of the C-terminal domain (CTD) of Pol II subunit Polr2A/Rbp1 and Spt5, and (2) degrading the exiting nascent RNA transcript via endonuclease activity. The integrator complex is also involved in the 3'-end processing of the U7 snRNA, and also the spliceosomal snRNAs U1, U2, U4 and U5. This Drosophila persimilis (Fruit fly) protein is Protein asunder (asun).